Consider the following 516-residue polypeptide: GMP synthase [glutamine-hydrolyzing] (516 aa).

Residues S7 to D203 enclose the Glutamine amidotransferase type-1 domain. The active-site Nucleophile is the C84. Residues H177 and E179 contribute to the active site. One can recognise a GMPS ATP-PPase domain in the interval W204–R391. An ATP-binding site is contributed by S231–T237.

In terms of assembly, homodimer.

It carries out the reaction XMP + L-glutamine + ATP + H2O = GMP + L-glutamate + AMP + diphosphate + 2 H(+). The protein operates within purine metabolism; GMP biosynthesis; GMP from XMP (L-Gln route): step 1/1. Catalyzes the synthesis of GMP from XMP. This chain is GMP synthase [glutamine-hydrolyzing], found in Chlorobaculum tepidum (strain ATCC 49652 / DSM 12025 / NBRC 103806 / TLS) (Chlorobium tepidum).